The primary structure comprises 330 residues: Tryptophan--tRNA ligase (330 aa).

Residues Gln10–Thr12 and Gly18–Asn19 each bind ATP. Positions Thr11 to Asn19 match the 'HIGH' region motif. Asp134 contacts L-tryptophan. ATP contacts are provided by residues Gly146–Asp148, Ile186, and Lys195–Ser199. The 'KMSKS' region motif lies at Lys195–Ser199.

This sequence belongs to the class-I aminoacyl-tRNA synthetase family. In terms of assembly, homodimer.

It is found in the cytoplasm. It catalyses the reaction tRNA(Trp) + L-tryptophan + ATP = L-tryptophyl-tRNA(Trp) + AMP + diphosphate + H(+). Catalyzes the attachment of tryptophan to tRNA(Trp). In Rickettsia typhi (strain ATCC VR-144 / Wilmington), this protein is Tryptophan--tRNA ligase.